The chain runs to 551 residues: Alkaline/neutral invertase CINV1 (551 aa).

The residue at position 1 (Met1) is an N-acetylmethionine. Phosphoserine occurs at positions 11, 14, 44, and 61. The interval 50-74 (TGYSRHDGIHDSPRGRSVLDTPLSS) is disordered. Residues 53 to 63 (SRHDGIHDSPR) are compositionally biased toward basic and acidic residues. A Phosphothreonine modification is found at Thr70. Phosphoserine is present on Ser547.

The protein belongs to the glycosyl hydrolase 100 family. As to quaternary structure, forms homohexamers. Interacts with PIP5K9. Interaction with PIP5K9 represses CINV1 activity. Interacts with GRF1, GRF2, GRF3, GRF4, GRF5, GRF6, GRF7, GRF8 and GRF10; these interactions are dependent of the phosphorylation at Ser-547. In terms of processing, phosphorylated at Ser-547 by CPK3 and CPK21. Expressed in radicle, hypocotyls, root tips and vascular cylinder, leaf vasculature, shoot stipules, trichomes, stem, stigma apex and base of siliques.

The protein resides in the cytoplasm. The protein localises to the cytosol. It localises to the nucleus. It catalyses the reaction Hydrolysis of terminal non-reducing beta-D-fructofuranoside residues in beta-D-fructofuranosides.. Cytosolic invertase that specifically cleaves sucrose into glucose and fructose and is involved in the regulation of multiple tissue development including primary root elongation, root hair growth, leaf and silique development, and floral transition. Is involved in osmotic stress-induced inhibition on lateral root growth by controlling the concentration of hexose in cells. May regulate sugar-mediated root development by controlling sucrose catabolism in root cells. Contributes to carbon partitioning and cellulose biosynthesis in seedlings. The polypeptide is Alkaline/neutral invertase CINV1 (Arabidopsis thaliana (Mouse-ear cress)).